The following is a 303-amino-acid chain: N-acetyl-D-glucosamine kinase (303 aa).

ATP contacts are provided by residues 4-11 and 133-140; these read GFDIGGTK and GVGGGLVL. Residues His157, Cys177, Cys179, and Cys184 each coordinate Zn(2+).

This sequence belongs to the ROK (NagC/XylR) family. NagK subfamily.

It catalyses the reaction N-acetyl-D-glucosamine + ATP = N-acetyl-D-glucosamine 6-phosphate + ADP + H(+). Its pathway is cell wall biogenesis; peptidoglycan recycling. In terms of biological role, catalyzes the phosphorylation of N-acetyl-D-glucosamine (GlcNAc) derived from cell-wall degradation, yielding GlcNAc-6-P. In Salmonella paratyphi A (strain ATCC 9150 / SARB42), this protein is N-acetyl-D-glucosamine kinase.